The primary structure comprises 1579 residues: DNA-directed RNA polymerase subunit beta' (1579 aa).

Positions 65, 67, 80, and 83 each coordinate Zn(2+). Residues Asp-601, Asp-603, and Asp-605 each coordinate Mg(2+). Residues Cys-938, Cys-1012, Cys-1019, and Cys-1022 each contribute to the Zn(2+) site.

This sequence belongs to the RNA polymerase beta' chain family. In terms of assembly, the RNAP catalytic core consists of 2 alpha, 1 beta, 1 beta' and 1 omega subunit. When a sigma factor is associated with the core the holoenzyme is formed, which can initiate transcription. Requires Mg(2+) as cofactor. It depends on Zn(2+) as a cofactor.

It carries out the reaction RNA(n) + a ribonucleoside 5'-triphosphate = RNA(n+1) + diphosphate. Functionally, DNA-dependent RNA polymerase catalyzes the transcription of DNA into RNA using the four ribonucleoside triphosphates as substrates. This chain is DNA-directed RNA polymerase subunit beta', found in Sulfurihydrogenibium sp. (strain YO3AOP1).